The primary structure comprises 347 residues: Protein-glutamate methylesterase/protein-glutamine glutaminase 1 (347 aa).

The 118-residue stretch at 6–123 folds into the Response regulatory domain; that stretch reads RVLVVDDSAT…LRPFGDLAEK (118 aa). Position 57 is a 4-aspartylphosphate (Asp57). Positions 150–342 constitute a CheB-type methylesterase domain; sequence FRVGRKIVAI…EEILKMTAAR (193 aa). Catalysis depends on residues Ser162, His188, and Asp284.

The protein belongs to the CheB family. In terms of processing, phosphorylated by CheA. Phosphorylation of the N-terminal regulatory domain activates the methylesterase activity.

The protein localises to the cytoplasm. The enzyme catalyses [protein]-L-glutamate 5-O-methyl ester + H2O = L-glutamyl-[protein] + methanol + H(+). It carries out the reaction L-glutaminyl-[protein] + H2O = L-glutamyl-[protein] + NH4(+). Involved in chemotaxis. Part of a chemotaxis signal transduction system that modulates chemotaxis in response to various stimuli. Catalyzes the demethylation of specific methylglutamate residues introduced into the chemoreceptors (methyl-accepting chemotaxis proteins or MCP) by CheR. Also mediates the irreversible deamidation of specific glutamine residues to glutamic acid. In Rhizobium johnstonii (strain DSM 114642 / LMG 32736 / 3841) (Rhizobium leguminosarum bv. viciae), this protein is Protein-glutamate methylesterase/protein-glutamine glutaminase 1.